A 481-amino-acid polypeptide reads, in one-letter code: Sestrin-1 (481 aa).

The segment at 63 to 244 is N-terminal domain; may mediate the alkylhydroperoxide reductase activity; that stretch reads FADAFTDLGR…ICDITNGNHG (182 aa). The active-site Cysteine sulfenic acid (-SOH) intermediate is Cys-122. Residues 295 to 316 are disordered; the sequence is KTESMVFSTEDEDPPPDIDVSR. The segment at 310-481 is C-terminal domain; mediates TORC1 regulation; that stretch reads PDIDVSRHFE…ALRAITRYMT (172 aa). L-leucine is bound by residues 375–378, Thr-387, and Glu-452; that span reads TYNT.

The protein belongs to the sestrin family.

It is found in the nucleus. The protein resides in the cytoplasm. The enzyme catalyses a hydroperoxide + L-cysteinyl-[protein] = S-hydroxy-L-cysteinyl-[protein] + an alcohol. May function as an intracellular leucine sensor that negatively regulates the TORC1 signaling pathway through the GATOR complex. In absence of leucine, binds the GATOR subcomplex GATOR2 and prevents TORC1 signaling. Binding of leucine to SESN2 disrupts its interaction with GATOR2 thereby activating the TORC1 signaling pathway. This stress-inducible metabolic regulator may also play a role in protection against oxidative and genotoxic stresses. May prevent the accumulation of reactive oxygen species (ROS) through the alkylhydroperoxide reductase activity born by the N-terminal domain of the protein. This chain is Sestrin-1, found in Xenopus laevis (African clawed frog).